The following is a 98-amino-acid chain: Alpha-elicitin MGM-alpha (98 aa).

Disulfide bonds link Cys3/Cys71, Cys27/Cys56, and Cys51/Cys95.

This sequence belongs to the elicitin family.

The protein resides in the secreted. Induces local and distal defense responses (incompatible hypersensitive reaction) in plants from the solanaceae and cruciferae families. Elicits leaf necrosis and causes the accumulation of pathogenesis-related proteins. Might interact with the lipidic molecules of the plasma membrane. The polypeptide is Alpha-elicitin MGM-alpha (Phytophthora megasperma (Potato pink rot fungus)).